The chain runs to 426 residues: Actin-like protein 6B (426 aa).

An essential for mediating its function in dendritic development; may contribute to neuronal-specific targeting region spans residues 39–82 (TTVGLLAAEEGGGLELEGEKEKKGKIFHIDTNALHVPRDGAEVM).

Belongs to the actin family. In terms of assembly, component of the multiprotein chromatin-remodeling complexes SWI/SNF: SWI/SNF-A (BAF), SWI/SNF-B (PBAF) and related complexes. The canonical complex contains a catalytic subunit (either SMARCA4/BRG1/BAF190A or SMARCA2/BRM/BAF190B) and at least SMARCE1, ACTL6A/BAF53, SMARCC1/BAF155, SMARCC2/BAF170, and SMARCB1/SNF5/BAF47. Other subunits specific to each of the complexes may also be present permitting several possible combinations developmentally and tissue specific. Component of the BAF complex, which includes at least actin (ACTB), ARID1A/BAF250A, ARID1B/BAF250B, SMARCA2/BRM, SMARCA4/BRG1/BAF190A, ACTL6A/BAF53, ACTL6B/BAF53B, SMARCE1/BAF57, SMARCC1/BAF155, SMARCC2/BAF170, SMARCB1/SNF5/INI1, and one or more SMARCD1/BAF60A, SMARCD2/BAF60B, or SMARCD3/BAF60C. Component of neuron-specific chromatin remodeling complex (nBAF complex) composed of at least, ARID1A/BAF250A or ARID1B/BAF250B, SMARCD1/BAF60A or SMARCD2/BAF60B or SMARCD3/BAF60C, SMARCA2/BRM/BAF190B, SMARCA4/BRG1/BAF190A, SMARCB1/BAF47, SMARCC1/BAF155, SMARCE1/BAF57, SMARCC2/BAF170, DPF1/BAF45B, DPF3/BAF45C, ACTL6B/BAF53B and actin (ACTB). Note that the nBAF complex is polymorphic in regard to the ATPase, SMARCA2 and SMARCA4 occupying mutually exclusive positions. May be a component of the SWI/SNF-B (PBAF) chromatin remodeling complex, at least composed of SMARCA4/BRG1, SMARCB1/BAF47/SNF5, ACTL6A/BAF53A or ACTL6B/BAF53B, SMARCE1/BAF57, SMARCD1/BAF60A, SMARCD2/BAF60B, perhaps SMARCD3/BAF60C, SMARCC1/BAF155, SMARCC2/BAF170, PBRM1/BAF180, ARID2/BAF200 and actin.

Its subcellular location is the nucleus. Functionally, involved in transcriptional activation and repression of select genes by chromatin remodeling (alteration of DNA-nucleosome topology). Component of SWI/SNF chromatin remodeling complexes that carry out key enzymatic activities, changing chromatin structure by altering DNA-histone contacts within a nucleosome in an ATP-dependent manner. Belongs to the neuron-specific chromatin remodeling complex (nBAF complex), as such plays a role in remodeling mononucleosomes in an ATP-dependent fashion, and is required for postmitotic neural development and dendritic outgrowth. During neural development a switch from a stem/progenitor to a postmitotic chromatin remodeling mechanism occurs as neurons exit the cell cycle and become committed to their adult state. The transition from proliferating neural stem/progenitor cells to postmitotic neurons requires a switch in subunit composition of the npBAF and nBAF complexes. As neural progenitors exit mitosis and differentiate into neurons, npBAF complexes which contain ACTL6A/BAF53A and PHF10/BAF45A, are exchanged for homologous alternative ACTL6B/BAF53B and DPF1/BAF45B or DPF3/BAF45C subunits in neuron-specific complexes (nBAF). The npBAF complex is essential for the self-renewal/proliferative capacity of the multipotent neural stem cells. The nBAF complex along with CREST plays a role regulating the activity of genes essential for dendrite growth. ACTL6B/BAF53B is not essential for assembly of the nBAF complex but is required for targeting the complex and CREST to the promoter of genes essential for dendritic growth. Essential for neuronal maturation and dendrite development. This Bos taurus (Bovine) protein is Actin-like protein 6B (ACTL6B).